Reading from the N-terminus, the 235-residue chain is Homeobox-leucine zipper protein ATHB-12 (235 aa).

The segment at residues 27 to 86 is a DNA-binding region (homeobox); the sequence is KSNNQKRFSEEQIKSLELIFESETRLEPRKKVQVARELGLQPRQVAIWFQNKRARWKTKQ. The segment at 87-122 is leucine-zipper; the sequence is LEKEYNTLRANYNNLASQFEIMKKEKQSLVSELQRL. 2 stretches are compositionally biased toward basic and acidic residues: residues 128-138 and 152-162; these read RPKEEKHHECC and HNGKSEPEGRL. The segment at 128-167 is disordered; sequence RPKEEKHHECCGDQGLALSSSTESHNGKSEPEGRLDQGSV.

It belongs to the HD-ZIP homeobox family. Class I subfamily. As to quaternary structure, interacts with TFIIB1. As to expression, widely expressed.

Its subcellular location is the nucleus. Probable transcription activator that may act as growth regulators in response to water deficit. This chain is Homeobox-leucine zipper protein ATHB-12 (ATHB-12), found in Arabidopsis thaliana (Mouse-ear cress).